A 312-amino-acid chain; its full sequence is DDRGK domain-containing protein 1 (312 aa).

Residues 1-2 (ME) lie on the Lumenal side of the membrane. The chain crosses the membrane as a helical span at residues 3–23 (LIILVGIATALLVVIITLYLL). Topologically, residues 24-312 (QKKNAAPETK…ISAGGEEASS (289 aa)) are cytoplasmic. The span at 59 to 79 (NQRNRLRQNAPAAPAGQVAPA) shows a compositional bias: low complexity. Residues 59 to 162 (NQRNRLRQNA…RKHQEDLEAE (104 aa)) are disordered. A compositionally biased stretch (basic and acidic residues) spans 110 to 162 (LDEKMGAKKRAKMEAKEQKRLQREQELHDREQRKVKEAKEEAERKHQEDLEAE).

It belongs to the DDRGK1 family. As to quaternary structure, interacts with Atg9; the interaction is transient.

Its subcellular location is the endoplasmic reticulum membrane. Substrate adapter for ufmylation, the covalent attachment of the ubiquitin-like modifier UFM1 to substrate proteins. Required for ufmylation of Atg9; protects the nervous system during aging, possibly by stabilizing Atg9 and supporting its function. The polypeptide is DDRGK domain-containing protein 1 (Drosophila yakuba (Fruit fly)).